The primary structure comprises 320 residues: MRSTNTRSARSRPTKRSVNASATPTQSFHRVDAHLSLLEGAEETGWVEFKTNTRVERIEQDADSVTVYDQNGNAYRGVALIGADGVRSVVRQTYVNDQPRVTGHVVYRAVVDKDEFPQDLRWNASSLWVGPKCHLVHYPLRGGEQYNIVVTFQSRQQEEWGVTEGSKEEVESYFQDICPKARQLIGLPKSWKRWATADREPIPQWTFGRTTLLGDAAHPTTQYMAQGACMALEDAVTLGEALRVHGNDWGKALDLYQRSRITRTARIVLSGREMGRLYHAQGVERLVRNSLWKGRTTEQFYDAIQWLYGWNVDNCLSESI.

A disordered region spans residues 1–25 (MRSTNTRSARSRPTKRSVNASATPT). A compositionally biased stretch (polar residues) spans 16–25 (RSVNASATPT).

It belongs to the 3-hydroxybenzoate 6-hydroxylase family. Requires FAD as cofactor.

The catalysed reaction is 3-hydroxybenzoate + NADH + O2 + H(+) = 2,5-dihydroxybenzoate + NAD(+) + H2O. Functionally, catalyzes the conversion of 3-hydroxybenzoate to gentisate. The protein is 3-hydroxybenzoate 6-hydroxylase 2 (hbzD) of Aquipseudomonas alcaligenes (Pseudomonas alcaligenes).